Reading from the N-terminus, the 619-residue chain is Chaperone protein HscA homolog (619 aa).

It belongs to the heat shock protein 70 family.

Functionally, chaperone involved in the maturation of iron-sulfur cluster-containing proteins. Has a low intrinsic ATPase activity which is markedly stimulated by HscB. In Haemophilus influenzae (strain PittEE), this protein is Chaperone protein HscA homolog.